Here is a 976-residue protein sequence, read N- to C-terminus: Vacuolar membrane protease (976 aa).

At 1-15 (MKLKSVFRSVLKYRK) the chain is on the cytoplasmic side. Residues 16 to 36 (TNLSLLLLITYSIITLLYIFD) traverse the membrane as a helical segment. Residues 37–359 (HERYKLNLPK…KFFVISAKTL (323 aa)) are Vacuolar-facing. 2 N-linked (GlcNAc...) asparagine glycosylation sites follow: asparagine 96 and asparagine 121. Zn(2+) contacts are provided by histidine 156 and aspartate 168. N-linked (GlcNAc...) asparagine glycosylation occurs at asparagine 189. The active-site Proton acceptor is glutamate 200. Glutamate 201 lines the Zn(2+) pocket. Asparagine 217 carries N-linked (GlcNAc...) asparagine glycosylation. The Zn(2+) site is built by glutamate 226 and histidine 300. A helical membrane pass occupies residues 360 to 380 (FYWNCIFLLVSPVVAIGLYLI). Residues 381–392 (SRDRMTWKSYSW) lie on the Cytoplasmic side of the membrane. The chain crosses the membrane as a helical span at residues 393-412 (LSWTRFPLSLAAGIIVQKLF). Over 413–428 (SNDIIRSNPLTFSRNY) the chain is Vacuolar. A helical transmembrane segment spans residues 429-449 (FWPISAFFTQVIFTSYVLINC). Topologically, residues 450–461 (SNFFFPCADMKS) are cytoplasmic. A helical transmembrane segment spans residues 462–482 (LSIIELFIILWTILLFTSKLL). The Vacuolar portion of the chain corresponds to 483 to 496 (YSSDYRYTGLYPLS). Residues 497–517 (IFFLLSTIAAILRLLALALGM) form a helical membrane-spanning segment. At 518–627 (RTRKRLGREC…NSLKLEYTDY (110 aa)) the chain is on the cytoplasmic side. The interval 528 to 610 (RDHHSNYSSH…PLLKGSNSME (83 aa)) is disordered. A compositionally biased stretch (polar residues) spans 549–558 (NLEQPQDQLT). The segment covering 559-570 (SSQDDQASIQDD) has biased composition (low complexity). The segment covering 582-601 (NVDEDHGMDSSSQQHDERVP) has biased composition (basic and acidic residues). Residues 628–648 (AWIIQFLLIVPIPSFILFNSV) traverse the membrane as a helical segment. The Vacuolar segment spans residues 649 to 668 (DVIMDALNHTVQEGSKATFD). N-linked (GlcNAc...) asparagine glycosylation is present at asparagine 656. A helical transmembrane segment spans residues 669–689 (VLRFGMVGSILIALPILPFFY). Residues 690-692 (KVN) are Cytoplasmic-facing. The chain crosses the membrane as a helical span at residues 693 to 713 (YITISLTALLFLISASKTLLV). Residues 714–976 (HPFTNSNPLK…LVIVKDAIIL (263 aa)) are Vacuolar-facing. N-linked (GlcNAc...) asparagine glycosylation is found at asparagine 768, asparagine 796, asparagine 811, asparagine 866, and asparagine 937.

It belongs to the peptidase M28 family. The cofactor is Zn(2+). N-glycosylated.

The protein resides in the vacuole membrane. Its function is as follows. May be involved in vacuolar sorting and osmoregulation. This chain is Vacuolar membrane protease, found in Saccharomyces cerevisiae (strain ATCC 204508 / S288c) (Baker's yeast).